The following is a 367-amino-acid chain: Phosphoribosylaminoimidazole-succinocarboxamide synthase (367 aa).

Belongs to the SAICAR synthetase family.

It carries out the reaction 5-amino-1-(5-phospho-D-ribosyl)imidazole-4-carboxylate + L-aspartate + ATP = (2S)-2-[5-amino-1-(5-phospho-beta-D-ribosyl)imidazole-4-carboxamido]succinate + ADP + phosphate + 2 H(+). The protein operates within purine metabolism; IMP biosynthesis via de novo pathway; 5-amino-1-(5-phospho-D-ribosyl)imidazole-4-carboxamide from 5-amino-1-(5-phospho-D-ribosyl)imidazole-4-carboxylate: step 1/2. The polypeptide is Phosphoribosylaminoimidazole-succinocarboxamide synthase (Shewanella oneidensis (strain ATCC 700550 / JCM 31522 / CIP 106686 / LMG 19005 / NCIMB 14063 / MR-1)).